The primary structure comprises 669 residues: DNA ligase (669 aa).

NAD(+)-binding positions include 31-35 (DSVYD), 80-81 (SL), and E112. K114 (N6-AMP-lysine intermediate) is an active-site residue. Positions 135, 172, 289, and 313 each coordinate NAD(+). C407, C410, C425, and C430 together coordinate Zn(2+). The 79-residue stretch at 591–669 (TDSGKLKGKT…EAEFLQLLEP (79 aa)) folds into the BRCT domain.

This sequence belongs to the NAD-dependent DNA ligase family. LigA subfamily. Mg(2+) serves as cofactor. The cofactor is Mn(2+).

The enzyme catalyses NAD(+) + (deoxyribonucleotide)n-3'-hydroxyl + 5'-phospho-(deoxyribonucleotide)m = (deoxyribonucleotide)n+m + AMP + beta-nicotinamide D-nucleotide.. In terms of biological role, DNA ligase that catalyzes the formation of phosphodiester linkages between 5'-phosphoryl and 3'-hydroxyl groups in double-stranded DNA using NAD as a coenzyme and as the energy source for the reaction. It is essential for DNA replication and repair of damaged DNA. This Synechocystis sp. (strain ATCC 27184 / PCC 6803 / Kazusa) protein is DNA ligase.